A 397-amino-acid chain; its full sequence is Oxysterol-binding protein homolog C354.07c (397 aa).

Residues Asn186 and Asn195 are each glycosylated (N-linked (GlcNAc...) asparagine).

The protein belongs to the OSBP family.

It is found in the endoplasmic reticulum. The polypeptide is Oxysterol-binding protein homolog C354.07c (Schizosaccharomyces pombe (strain 972 / ATCC 24843) (Fission yeast)).